We begin with the raw amino-acid sequence, 107 residues long: Nucleoid-associated protein RP866 (107 aa).

The protein belongs to the YbaB/EbfC family. Homodimer.

Its subcellular location is the cytoplasm. It is found in the nucleoid. Its function is as follows. Binds to DNA and alters its conformation. May be involved in regulation of gene expression, nucleoid organization and DNA protection. In Rickettsia prowazekii (strain Madrid E), this protein is Nucleoid-associated protein RP866.